The following is a 676-amino-acid chain: Rho guanine nucleotide exchange factor 37 (676 aa).

The disordered stretch occupies residues Met-1–Lys-26. Residues His-30–Tyr-213 enclose the DH domain. One can recognise a BAR domain in the interval Leu-254–Asp-455. 2 consecutive SH3 domains span residues Gly-506–Pro-569 and Pro-603–Ser-666. Disordered stretches follow at residues His-568 to Thr-601 and Pro-657 to Ser-676.

In terms of biological role, may act as a guanine nucleotide exchange factor (GEF). This is Rho guanine nucleotide exchange factor 37 (Arhgef37) from Rattus norvegicus (Rat).